The sequence spans 616 residues: Hemagglutinin-neuraminidase (616 aa).

The Intravirion segment spans residues methionine 1–arginine 26. The helical transmembrane segment at isoleucine 27–serine 47 threads the bilayer. Over methionine 48 to proline 616 the chain is Virion surface. N-linked (GlcNAc...) asparagine; by host glycosylation occurs at asparagine 119. The segment at glycine 124–tyrosine 152 is important for interaction with fusion/F protein. 3 disulfides stabilise this stretch: cysteine 172–cysteine 196, cysteine 186–cysteine 247, and cysteine 238–cysteine 251. Residues asparagine 234–serine 239 are involved in neuraminidase activity. N-linked (GlcNAc...) asparagine; by host glycosylation is found at asparagine 341 and asparagine 433. Cystine bridges form between cysteine 344/cysteine 461 and cysteine 455/cysteine 465. N-linked (GlcNAc...) asparagine; by host glycans are attached at residues asparagine 481, asparagine 538, and asparagine 600. A disulfide bridge links cysteine 531 with cysteine 542.

The protein belongs to the paramyxoviruses hemagglutinin-neuraminidase family. Homotetramer; composed of disulfide-linked homodimers. Interacts with F protein trimer. Interacts with host CG-1B; this interaction inhibits viral adsorption and replication rather than internalization.

It localises to the virion membrane. Its subcellular location is the host cell membrane. It carries out the reaction Hydrolysis of alpha-(2-&gt;3)-, alpha-(2-&gt;6)-, alpha-(2-&gt;8)- glycosidic linkages of terminal sialic acid residues in oligosaccharides, glycoproteins, glycolipids, colominic acid and synthetic substrates.. Functionally, mediates the viral entry into the host cell together with fusion/F protein. Attaches the virus to sialic acid-containing cell receptors and thereby initiates infection. Binding of HN protein to the receptor induces a conformational change that allows the F protein to trigger virion/cell membranes fusion. Its function is as follows. Neuraminidase activity ensures the efficient spread of the virus by dissociating the mature virions from the neuraminic acid containing glycoproteins. This Newcastle disease virus (strain Chicken/Northern Ireland/Ulster/67) (NDV) protein is Hemagglutinin-neuraminidase (HN).